The following is a 298-amino-acid chain: GTPase Era (298 aa).

The region spanning 8-176 is the Era-type G domain; it reads RSGSVAVIGR…VSDLLKLVPE (169 aa). The G1 stretch occupies residues 16 to 23; that stretch reads GRPNVGKS. GTP is bound at residue 16–23; sequence GRPNVGKS. Residues 42–46 form a G2 region; that stretch reads QTTRH. Residues 63 to 66 form a G3 region; the sequence is DTPG. GTP-binding positions include 63–67 and 125–128; these read DTPGL and NKVD. A G4 region spans residues 125–128; the sequence is NKVD. Positions 155-157 are G5; that stretch reads VSA. The region spanning 199–283 is the KH type-2 domain; that stretch reads VREQLMRQLG…FLETWVRVRE (85 aa).

The protein belongs to the TRAFAC class TrmE-Era-EngA-EngB-Septin-like GTPase superfamily. Era GTPase family. In terms of assembly, monomer.

It is found in the cytoplasm. The protein localises to the cell inner membrane. An essential GTPase that binds both GDP and GTP, with rapid nucleotide exchange. Plays a role in 16S rRNA processing and 30S ribosomal subunit biogenesis and possibly also in cell cycle regulation and energy metabolism. This is GTPase Era from Xanthomonas campestris pv. campestris (strain 8004).